The primary structure comprises 327 residues: tRNA dimethylallyltransferase (327 aa).

14–21 serves as a coordination point for ATP; that stretch reads GPTASGKT. 16-21 serves as a coordination point for substrate; it reads TASGKT. 2 interaction with substrate tRNA regions span residues 39-42 and 163-167; these read DSAL and QRIQR.

It belongs to the IPP transferase family. As to quaternary structure, monomer. The cofactor is Mg(2+).

The catalysed reaction is adenosine(37) in tRNA + dimethylallyl diphosphate = N(6)-dimethylallyladenosine(37) in tRNA + diphosphate. Its function is as follows. Catalyzes the transfer of a dimethylallyl group onto the adenine at position 37 in tRNAs that read codons beginning with uridine, leading to the formation of N6-(dimethylallyl)adenosine (i(6)A). This Xanthomonas axonopodis pv. citri (strain 306) protein is tRNA dimethylallyltransferase.